The primary structure comprises 360 residues: C-C chemokine receptor type 4 (360 aa).

At 1–39 the chain is on the extracellular side; sequence MNATEVTDTTQDETVYNSYYFYESMPKPCTKEGIKAFGE. Asparagine 2 carries N-linked (GlcNAc...) asparagine glycosylation. Residues 40–67 traverse the membrane as a helical segment; it reads VFLPPLYSLVFLLGLFGNSVVVLVLFKY. Topologically, residues 68 to 77 are cytoplasmic; sequence KRLKSMTDVY. A helical membrane pass occupies residues 78–98; sequence LLNLAISDLLFVLSLPFWGYY. Residues 99-111 lie on the Extracellular side of the membrane; sequence AADQWVFGLGLCK. Cysteine 110 and cysteine 187 are disulfide-bonded. Residues 112 to 133 traverse the membrane as a helical segment; that stretch reads IVSWMYLVGFYSGIFFIMLMSI. Topologically, residues 134-150 are cytoplasmic; that stretch reads DRYLAIVHAVFSLKART. Residues 151–175 traverse the membrane as a helical segment; sequence LTYGVITSLITWSVAVFASLPGLLF. The Extracellular segment spans residues 176–206; it reads STCYTEHNHTYCKTQYSVNSTTWKVLSSLEI. N-linked (GlcNAc...) asparagine glycans are attached at residues asparagine 183 and asparagine 194. Residues 207-226 form a helical membrane-spanning segment; sequence NVLGLLIPLGIMLFCYSMII. Topologically, residues 227–242 are cytoplasmic; sequence RTLQHCKNEKKNRAVR. The helical transmembrane segment at 243 to 267 threads the bilayer; that stretch reads MIFAVVVLFLGFWTPYNVVLFLETL. Over 268–284 the chain is Extracellular; the sequence is VELEVLQDCTLERYLDY. A helical membrane pass occupies residues 285-308; that stretch reads AIQATETLAFIHCCLNPVIYFFLG. Over 309–360 the chain is Cytoplasmic; that stretch reads EKFRKYITQLFRTCRGPLVLCKHCDFLQVYSADMSSSSYTQSTVDHDFRDAL.

It belongs to the G-protein coupled receptor 1 family. In natural killer cells, CCL22 binding induces phosphorylation on yet undefined Ser/Thr residues, most probably by beta-adrenergic receptor kinases 1 and 2. In terms of tissue distribution, expressed in the thymus, macrophages and T- and B-cells.

Its subcellular location is the cell membrane. Functionally, high affinity receptor for the C-C type chemokines CCL17/TARC and CCL22/MDC. The activity of this receptor is mediated by G(i) proteins which activate a phosphatidylinositol-calcium second messenger system. Could play a role in lipopolysaccharide (LPS)-induced endotoxic shock. In the CNS, could mediate hippocampal-neuron survival. In Mus musculus (Mouse), this protein is C-C chemokine receptor type 4 (Ccr4).